The chain runs to 478 residues: MSTFYTVLPILFLAIAGMIMLMSGVFTDRDHSFAITAASIVVLAIAARLLVAAPGGTIFHGLYQTNDFTRFADVLVALGAIGALALSVTFNRNIGITRFEFPVLVLFAVTGMVVLVSASDLITLYIGFEIQSLALYVLAAFARHNLRSSEAGLKYFVLGALSSGLLLYGISLVYGFAGTTNFAGIAHALAGHPTAAVGSTIGLVFVLVGLAFKISAAPFHMWTPDVYEGAPTSVTAFFATAPKIAVFALLLRVMLGPFGPVLGQWRDLVQIIAAASMVIGAIGAIRQTSIKRLMGYSSIGHMGYALMGLAAGTAAGVSGALIYLAIYLVMSLGTFGCIIAMSRGRQPVERIADLAGMASDDPRFAFVLAVMMWSMAGIPPLAGFFGKFYVFAAAINAGLGPLAVLGIITSVIAAFYYLRVIKVMYFDAGEPGLDRRSAGVSLVMGAAAAFTVLFVFHPSTLTTLSTMAAHALMTSQGF.

14 helical membrane passes run 6–26, 33–53, 71–91, 99–119, 121–141, 156–176, 193–212, 244–264, 265–285, 299–319, 321–341, 364–384, 388–408, and 438–458; these read TVLP…SGVF, FAIT…LVAA, FADV…VTFN, FEFP…VSAS, LITL…LAAF, FVLG…VYGF, PTAA…GLAF, IAVF…VLGQ, WRDL…IGAI, IGHM…GVSG, LIYL…IIAM, FAFV…LAGF, FYVF…LGII, and AGVS…VFHP.

Belongs to the complex I subunit 2 family. In terms of assembly, NDH-1 is composed of 14 different subunits. Subunits NuoA, H, J, K, L, M, N constitute the membrane sector of the complex.

Its subcellular location is the cell inner membrane. It carries out the reaction a quinone + NADH + 5 H(+)(in) = a quinol + NAD(+) + 4 H(+)(out). NDH-1 shuttles electrons from NADH, via FMN and iron-sulfur (Fe-S) centers, to quinones in the respiratory chain. The immediate electron acceptor for the enzyme in this species is believed to be ubiquinone. Couples the redox reaction to proton translocation (for every two electrons transferred, four hydrogen ions are translocated across the cytoplasmic membrane), and thus conserves the redox energy in a proton gradient. This is NADH-quinone oxidoreductase subunit N 1 from Acidiphilium cryptum (strain JF-5).